Consider the following 254-residue polypeptide: 3-deoxy-manno-octulosonate cytidylyltransferase (254 aa).

The protein belongs to the KdsB family.

The protein resides in the cytoplasm. The enzyme catalyses 3-deoxy-alpha-D-manno-oct-2-ulosonate + CTP = CMP-3-deoxy-beta-D-manno-octulosonate + diphosphate. It functions in the pathway nucleotide-sugar biosynthesis; CMP-3-deoxy-D-manno-octulosonate biosynthesis; CMP-3-deoxy-D-manno-octulosonate from 3-deoxy-D-manno-octulosonate and CTP: step 1/1. Its pathway is bacterial outer membrane biogenesis; lipopolysaccharide biosynthesis. Activates KDO (a required 8-carbon sugar) for incorporation into bacterial lipopolysaccharide in Gram-negative bacteria. In Pseudomonas entomophila (strain L48), this protein is 3-deoxy-manno-octulosonate cytidylyltransferase.